Reading from the N-terminus, the 538-residue chain is Histone-arginine methyltransferase CARMER (538 aa).

Positions 148–457 constitute an SAM-dependent MTase PRMT-type domain; the sequence is ASQYFQFYGY…QSYDVTIDLH (310 aa). Residues glutamine 161, arginine 170, glycine 194, glutamate 216, glutamate 245, and threonine 273 each contribute to the S-adenosyl-L-methionine site. Asymmetric dimethylarginine; by autocatalysis is present on arginine 508.

The protein belongs to the class I-like SAM-binding methyltransferase superfamily. Protein arginine N-methyltransferase family. Homodimer. Post-translationally, the dimethylated protein is the major form.

The protein resides in the cytoplasm. It localises to the nucleus. It catalyses the reaction L-arginyl-[protein] + 2 S-adenosyl-L-methionine = N(omega),N(omega)-dimethyl-L-arginyl-[protein] + 2 S-adenosyl-L-homocysteine + 2 H(+). Methylates (mono- and asymmetric dimethylation) the guanidino nitrogens of arginyl residues in proteins. May methylate histone H3 at 'Arg-17' and activate transcription via chromatin remodeling. This chain is Histone-arginine methyltransferase CARMER (Art4), found in Drosophila virilis (Fruit fly).